A 585-amino-acid chain; its full sequence is A-type ATP synthase subunit A (585 aa).

An ATP-binding site is contributed by 231-238; that stretch reads GPFGSGKT.

Belongs to the ATPase alpha/beta chains family. In terms of assembly, has multiple subunits with at least A(3), B(3), C, D, E, F, H, I and proteolipid K(x).

It localises to the cell membrane. It carries out the reaction ATP + H2O + 4 H(+)(in) = ADP + phosphate + 5 H(+)(out). In terms of biological role, component of the A-type ATP synthase that produces ATP from ADP in the presence of a proton gradient across the membrane. The A chain is the catalytic subunit. The chain is A-type ATP synthase subunit A from Desulfurococcus sp. (strain SY).